The sequence spans 34 residues: AVVPASTVKTALAYTYPIHPYHSVYAHPHSVVIY.

The polypeptide is Cuticle protein 9 (Blaberus craniifer (Death's head cockroach)).